Consider the following 139-residue polypeptide: Protein cornichon homolog 4 (139 aa).

Helical transmembrane passes span 5–25 (VFVF…YFII), 57–77 (IVTV…NLPV), and 118–138 (LGFH…ALIN).

The protein belongs to the cornichon family. As to quaternary structure, interacts with Sec23/24 complex components SEC24B and SEC24D. Interacts with CCR5. Interacts with ADRB2 in the early secretory pathway.

The protein localises to the membrane. The protein resides in the endoplasmic reticulum. It localises to the endoplasmic reticulum-Golgi intermediate compartment. Involved in G protein-coupled receptors (GPCRs) trafficking from the endoplasmic reticulum to the cell surface; it promotes the exit of GPCRs from the early secretory pathway, likely through interaction with the COPII machinery. The polypeptide is Protein cornichon homolog 4 (CNIH4) (Homo sapiens (Human)).